A 316-amino-acid polypeptide reads, in one-letter code: CRISPR-associated endonuclease Cas1 (316 aa).

Residues E143, H206, and E221 each coordinate Mn(2+).

It belongs to the CRISPR-associated endonuclease Cas1 family. In terms of assembly, homodimer, forms a heterotetramer with a Cas2 homodimer. Mg(2+) is required as a cofactor. Mn(2+) serves as cofactor.

Its function is as follows. CRISPR (clustered regularly interspaced short palindromic repeat), is an adaptive immune system that provides protection against mobile genetic elements (viruses, transposable elements and conjugative plasmids). CRISPR clusters contain spacers, sequences complementary to antecedent mobile elements, and target invading nucleic acids. CRISPR clusters are transcribed and processed into CRISPR RNA (crRNA). Acts as a dsDNA endonuclease. Involved in the integration of spacer DNA into the CRISPR cassette. This chain is CRISPR-associated endonuclease Cas1, found in Aquifex aeolicus (strain VF5).